The sequence spans 291 residues: 33 kDa chaperonin (291 aa).

Disulfide bonds link cysteine 237–cysteine 239 and cysteine 270–cysteine 273.

The protein belongs to the HSP33 family. Post-translationally, under oxidizing conditions two disulfide bonds are formed involving the reactive cysteines. Under reducing conditions zinc is bound to the reactive cysteines and the protein is inactive.

The protein resides in the cytoplasm. In terms of biological role, redox regulated molecular chaperone. Protects both thermally unfolding and oxidatively damaged proteins from irreversible aggregation. Plays an important role in the bacterial defense system toward oxidative stress. In Bacillus cereus (strain G9842), this protein is 33 kDa chaperonin.